The following is a 916-amino-acid chain: DNA gyrase subunit A (916 aa).

The 503-residue stretch at 42–544 folds into the Topo IIA-type catalytic domain; that stretch reads LPDVRDGLKP…FGGDIADEDL (503 aa). Y130 functions as the O-(5'-phospho-DNA)-tyrosine intermediate in the catalytic mechanism. Residues 571–577 carry the GyrA-box motif; that stretch reads QRRGGRG. Residues 739–748 show a composition bias toward acidic residues; sequence SDDLEDETAD. 2 disordered regions span residues 739 to 774 and 897 to 916; these read SDDLEDETADNENTLPSGKNGVRPSGRGSGGLRGMR and ESELSGASVISNVTEPEAEN.

This sequence belongs to the type II topoisomerase GyrA/ParC subunit family. Heterotetramer, composed of two GyrA and two GyrB chains. In the heterotetramer, GyrA contains the active site tyrosine that forms a transient covalent intermediate with DNA, while GyrB binds cofactors and catalyzes ATP hydrolysis.

The protein localises to the cytoplasm. It catalyses the reaction ATP-dependent breakage, passage and rejoining of double-stranded DNA.. A type II topoisomerase that negatively supercoils closed circular double-stranded (ds) DNA in an ATP-dependent manner to modulate DNA topology and maintain chromosomes in an underwound state. Negative supercoiling favors strand separation, and DNA replication, transcription, recombination and repair, all of which involve strand separation. Also able to catalyze the interconversion of other topological isomers of dsDNA rings, including catenanes and knotted rings. Type II topoisomerases break and join 2 DNA strands simultaneously in an ATP-dependent manner. In Neisseria gonorrhoeae, this protein is DNA gyrase subunit A.